The chain runs to 77 residues: Neurotoxin LmNaTx21.1 (77 aa).

The first 7 residues, 1 to 7 (LILVACL), serve as a signal peptide directing secretion. Residues 16-76 (KDGYPVDWNN…VEIKGYGRCR (61 aa)) form the LCN-type CS-alpha/beta domain. Intrachain disulfides connect Cys26–Cys75, Cys30–Cys51, Cys37–Cys58, and Cys41–Cys60.

Belongs to the long (4 C-C) scorpion toxin superfamily. Sodium channel inhibitor family. Alpha subfamily. In terms of tissue distribution, expressed by the venom gland.

It localises to the secreted. Its function is as follows. Binds voltage-independently at site-3 of voltage-gated sodium channels (Nav) and inhibits the inactivation of the activated channels, thereby blocking neuronal transmission. This Lychas mucronatus (Chinese swimming scorpion) protein is Neurotoxin LmNaTx21.1.